We begin with the raw amino-acid sequence, 679 residues long: Enzymatic polyprotein (679 aa).

The segment at 40–130 is protease; sequence LHCFVDTGAS…LYEPFIQFTD (91 aa). Asp-45 is a catalytic residue. The 181-residue stretch at 272 to 452 folds into the Reverse transcriptase domain; sequence LKVIKPSKSP…KKINFLGLEI (181 aa).

Belongs to the caulimoviridae enzymatic polyprotein family.

It carries out the reaction DNA(n) + a 2'-deoxyribonucleoside 5'-triphosphate = DNA(n+1) + diphosphate. Functionally, encodes for at least two polypeptides: protease (PR) and reverse transcriptase (RT). The protease processes the polyprotein in cis. Reverse transcriptase is multifunctional enzyme that converts the viral RNA genome into dsDNA in viral cytoplasmic capsids. This enzyme displays a DNA polymerase activity that can copy either DNA or RNA templates, and a ribonuclease H (RNase H) activity that cleaves the RNA strand of RNA-DNA heteroduplexes in a partially processive 3'- to 5'-endonucleasic mode. Neo-synthesized pregenomic RNA (pgRNA) are encapsidated, and reverse-transcribed inside the nucleocapsid. Partial (+)DNA is synthesized from the (-)DNA template and generates the relaxed circular DNA (RC-DNA) genome. After budding and infection, the RC-DNA migrates in the nucleus, and is converted into a plasmid-like covalently closed circular DNA (cccDNA). The polypeptide is Enzymatic polyprotein (Cauliflower mosaic virus (strain BBC) (CaMV)).